The primary structure comprises 279 residues: Undecaprenyl-diphosphatase (279 aa).

Helical transmembrane passes span Leu-2–Leu-22, Ala-44–Ile-64, Trp-85–Leu-105, Phe-113–Ile-133, Val-163–Leu-183, Thr-188–Leu-208, Ala-223–Ile-243, and Phe-255–Phe-275.

The protein belongs to the UppP family.

Its subcellular location is the cell membrane. It carries out the reaction di-trans,octa-cis-undecaprenyl diphosphate + H2O = di-trans,octa-cis-undecaprenyl phosphate + phosphate + H(+). Functionally, catalyzes the dephosphorylation of undecaprenyl diphosphate (UPP). Confers resistance to bacitracin. This chain is Undecaprenyl-diphosphatase, found in Streptococcus pyogenes serotype M2 (strain MGAS10270).